A 71-amino-acid polypeptide reads, in one-letter code: Exodeoxyribonuclease 7 small subunit (71 aa).

It belongs to the XseB family. In terms of assembly, heterooligomer composed of large and small subunits.

The protein localises to the cytoplasm. The enzyme catalyses Exonucleolytic cleavage in either 5'- to 3'- or 3'- to 5'-direction to yield nucleoside 5'-phosphates.. Bidirectionally degrades single-stranded DNA into large acid-insoluble oligonucleotides, which are then degraded further into small acid-soluble oligonucleotides. This chain is Exodeoxyribonuclease 7 small subunit, found in Streptococcus equi subsp. equi (strain 4047).